The following is a 242-amino-acid chain: Probable inactive serine protease 58 (242 aa).

The signal sequence occupies residues 1–17 (MNLILLWALLNLPVALT). In terms of domain architecture, Peptidase S1 spans 18 to 240 (FDPNYKDDIT…YIPWIENTIQ (223 aa)). Disulfide bonds link cysteine 41–cysteine 57, cysteine 134–cysteine 202, cysteine 166–cysteine 181, and cysteine 192–cysteine 216. An N-linked (GlcNAc...) asparagine glycan is attached at asparagine 157.

This sequence belongs to the peptidase S1 family.

The protein localises to the secreted. This Bos taurus (Bovine) protein is Probable inactive serine protease 58 (PRSS58).